The following is a 284-amino-acid chain: Formamidopyrimidine-DNA glycosylase (284 aa).

Proline 2 serves as the catalytic Schiff-base intermediate with DNA. Glutamate 3 acts as the Proton donor in catalysis. The Proton donor; for beta-elimination activity role is filled by lysine 58. Residues histidine 101, arginine 120, and arginine 163 each contribute to the DNA site. The FPG-type zinc finger occupies 248–284; the sequence is RVYDRENAPCVTAGCPDVVRRVVQSGRSSFYCPSCQR. The active-site Proton donor; for delta-elimination activity is arginine 274.

This sequence belongs to the FPG family. As to quaternary structure, monomer. Requires Zn(2+) as cofactor.

The catalysed reaction is Hydrolysis of DNA containing ring-opened 7-methylguanine residues, releasing 2,6-diamino-4-hydroxy-5-(N-methyl)formamidopyrimidine.. It catalyses the reaction 2'-deoxyribonucleotide-(2'-deoxyribose 5'-phosphate)-2'-deoxyribonucleotide-DNA = a 3'-end 2'-deoxyribonucleotide-(2,3-dehydro-2,3-deoxyribose 5'-phosphate)-DNA + a 5'-end 5'-phospho-2'-deoxyribonucleoside-DNA + H(+). Functionally, involved in base excision repair of DNA damaged by oxidation or by mutagenic agents. Acts as a DNA glycosylase that recognizes and removes damaged bases. Has a preference for oxidized purines, such as 7,8-dihydro-8-oxoguanine (8-oxoG). Has AP (apurinic/apyrimidinic) lyase activity and introduces nicks in the DNA strand. Cleaves the DNA backbone by beta-delta elimination to generate a single-strand break at the site of the removed base with both 3'- and 5'-phosphates. This Dinoroseobacter shibae (strain DSM 16493 / NCIMB 14021 / DFL 12) protein is Formamidopyrimidine-DNA glycosylase.